Reading from the N-terminus, the 279-residue chain is Dermonecrotic toxin LspiSicTox-betaIE3ii (279 aa).

H5 is an active-site residue. The Mg(2+) site is built by E25 and D27. The active-site Nucleophile is the H41. 2 disulfides stabilise this stretch: C45-C51 and C47-C190. Residue D85 coordinates Mg(2+).

This sequence belongs to the arthropod phospholipase D family. Class II subfamily. It depends on Mg(2+) as a cofactor. In terms of tissue distribution, expressed by the venom gland.

Its subcellular location is the secreted. The catalysed reaction is an N-(acyl)-sphingosylphosphocholine = an N-(acyl)-sphingosyl-1,3-cyclic phosphate + choline. It catalyses the reaction an N-(acyl)-sphingosylphosphoethanolamine = an N-(acyl)-sphingosyl-1,3-cyclic phosphate + ethanolamine. The enzyme catalyses a 1-acyl-sn-glycero-3-phosphocholine = a 1-acyl-sn-glycero-2,3-cyclic phosphate + choline. It carries out the reaction a 1-acyl-sn-glycero-3-phosphoethanolamine = a 1-acyl-sn-glycero-2,3-cyclic phosphate + ethanolamine. Dermonecrotic toxins cleave the phosphodiester linkage between the phosphate and headgroup of certain phospholipids (sphingolipid and lysolipid substrates), forming an alcohol (often choline) and a cyclic phosphate. This toxin acts on sphingomyelin (SM). It may also act on ceramide phosphoethanolamine (CPE), lysophosphatidylcholine (LPC) and lysophosphatidylethanolamine (LPE), but not on lysophosphatidylserine (LPS), and lysophosphatidylglycerol (LPG). It acts by transphosphatidylation, releasing exclusively cyclic phosphate products as second products. Induces dermonecrosis, hemolysis, increased vascular permeability, edema, inflammatory response, and platelet aggregation. The sequence is that of Dermonecrotic toxin LspiSicTox-betaIE3ii from Loxosceles spinulosa (Recluse spider).